A 77-amino-acid polypeptide reads, in one-letter code: Acyl carrier protein (77 aa).

One can recognise a Carrier domain in the interval 2 to 77; it reads AEVLEKVTKI…DAVKYIEANA (76 aa). Position 37 is an O-(pantetheine 4'-phosphoryl)serine (S37).

Belongs to the acyl carrier protein (ACP) family. 4'-phosphopantetheine is transferred from CoA to a specific serine of apo-ACP by AcpS. This modification is essential for activity because fatty acids are bound in thioester linkage to the sulfhydryl of the prosthetic group.

The protein localises to the cytoplasm. It participates in lipid metabolism; fatty acid biosynthesis. In terms of biological role, carrier of the growing fatty acid chain in fatty acid biosynthesis. The sequence is that of Acyl carrier protein from Listeria innocua serovar 6a (strain ATCC BAA-680 / CLIP 11262).